Consider the following 535-residue polypeptide: Dimethylaniline monooxygenase [N-oxide-forming] 2 (535 aa).

The residue at position 2 (A2) is an N-acetylalanine. FAD is bound by residues 9-13 (GAGVS), E32, 40-41 (VW), and 61-62 (NT). Residues 60–61 (TN) and 195–198 (SGSD) contribute to the NADP(+) site. K492 participates in a covalent cross-link: Glycyl lysine isopeptide (Lys-Gly) (interchain with G-Cter in SUMO). The chain crosses the membrane as a helical span at residues 510–530 (FPVSFLLKILGLVAVVVAFFC).

Belongs to the FMO family. FAD is required as a cofactor. Mg(2+) serves as cofactor.

It localises to the microsome membrane. It is found in the endoplasmic reticulum membrane. It catalyses the reaction N,N-dimethylaniline + NADPH + O2 + H(+) = N,N-dimethylaniline N-oxide + NADP(+) + H2O. Functionally, catalyzes the oxidative metabolism of numerous xenobiotics, including mainly therapeutic drugs and insecticides that contain a soft nucleophile, most commonly nitrogen and sulfur and participates to their bioactivation. The polypeptide is Dimethylaniline monooxygenase [N-oxide-forming] 2 (Macaca mulatta (Rhesus macaque)).